The following is a 216-amino-acid chain: Pentapeptide repeat protein VPA0095 (216 aa).

This sequence belongs to the pentapeptide repeat protein family.

Its function is as follows. Has no effect when overexpressed in E.coli. When Cys-115 is mutated to Tyr and overexpressed it increases (fluoro)quinolone resistance in E.coli up to 16-fold for ciprofloxacin, levofloxacin and nalidixic acid. This Vibrio parahaemolyticus serotype O3:K6 (strain RIMD 2210633) protein is Pentapeptide repeat protein VPA0095.